The following is a 282-amino-acid chain: 2-dehydro-3-deoxyphosphooctonate aldolase (282 aa).

The protein belongs to the KdsA family.

It localises to the cytoplasm. It carries out the reaction D-arabinose 5-phosphate + phosphoenolpyruvate + H2O = 3-deoxy-alpha-D-manno-2-octulosonate-8-phosphate + phosphate. Its pathway is carbohydrate biosynthesis; 3-deoxy-D-manno-octulosonate biosynthesis; 3-deoxy-D-manno-octulosonate from D-ribulose 5-phosphate: step 2/3. The protein operates within bacterial outer membrane biogenesis; lipopolysaccharide biosynthesis. The sequence is that of 2-dehydro-3-deoxyphosphooctonate aldolase from Shewanella woodyi (strain ATCC 51908 / MS32).